Reading from the N-terminus, the 377-residue chain is Glutamate 5-kinase (377 aa).

Lys-22 provides a ligand contact to ATP. Positions 62, 149, and 161 each coordinate substrate. Residues 181 to 182 and 223 to 229 each bind ATP; these read TD and TGGMVTK. Residues 285 to 359 form the PUA domain; that stretch reads QGTLVADSGA…GRNTAQLKRF (75 aa).

It belongs to the glutamate 5-kinase family.

It is found in the cytoplasm. It carries out the reaction L-glutamate + ATP = L-glutamyl 5-phosphate + ADP. Its pathway is amino-acid biosynthesis; L-proline biosynthesis; L-glutamate 5-semialdehyde from L-glutamate: step 1/2. Its function is as follows. Catalyzes the transfer of a phosphate group to glutamate to form L-glutamate 5-phosphate. This Bifidobacterium adolescentis (strain ATCC 15703 / DSM 20083 / NCTC 11814 / E194a) protein is Glutamate 5-kinase.